A 346-amino-acid polypeptide reads, in one-letter code: Heterogeneous nuclear ribonucleoprotein A2 homolog 1 (346 aa).

RRM domains are found at residues 9-92 (RKLF…ESAK) and 100-179 (KKLF…LSKQ). 2 disordered regions span residues 182–217 (QDVQNTRNNRGGNFGFGDSRGGGNFGSGPGGNFRGG) and 326–346 (NYGPGNASGGNGGGYGGRNRY). The segment covering 193–217 (GNFGFGDSRGGGNFGSGPGGNFRGG) has biased composition (gly residues). The interval 297-340 (QQSSNYGPMKSGGNFGGNRSMGGGPYGGGNYGPGNASGGNGGGY) is nuclear targeting sequence.

It is found in the nucleus. In terms of biological role, forms complexes (ribonucleosomes) with at least 20 other different hnRNP and heterogeneous nuclear RNA in the nucleus. The sequence is that of Heterogeneous nuclear ribonucleoprotein A2 homolog 1 from Xenopus laevis (African clawed frog).